Reading from the N-terminus, the 371-residue chain is DNA replication and repair protein RecF (371 aa).

30–37 (GQNGMGKT) lines the ATP pocket.

The protein belongs to the RecF family.

The protein localises to the cytoplasm. Its function is as follows. The RecF protein is involved in DNA metabolism; it is required for DNA replication and normal SOS inducibility. RecF binds preferentially to single-stranded, linear DNA. It also seems to bind ATP. In Phocaeicola vulgatus (strain ATCC 8482 / DSM 1447 / JCM 5826 / CCUG 4940 / NBRC 14291 / NCTC 11154) (Bacteroides vulgatus), this protein is DNA replication and repair protein RecF.